Reading from the N-terminus, the 31-residue chain is MEALVYTFLLISTLGIIFFGIFFREPPRIVK.

The chain crosses the membrane as a helical span at residues 3–23 (ALVYTFLLISTLGIIFFGIFF).

This sequence belongs to the PsbT family. As to quaternary structure, PSII is composed of 1 copy each of membrane proteins PsbA, PsbB, PsbC, PsbD, PsbE, PsbF, PsbH, PsbI, PsbJ, PsbK, PsbL, PsbM, PsbT, PsbY, PsbZ, Psb30/Ycf12, at least 3 peripheral proteins of the oxygen-evolving complex and a large number of cofactors. It forms dimeric complexes.

The protein resides in the plastid. Its subcellular location is the chloroplast thylakoid membrane. Its function is as follows. Found at the monomer-monomer interface of the photosystem II (PS II) dimer, plays a role in assembly and dimerization of PSII. PSII is a light-driven water plastoquinone oxidoreductase, using light energy to abstract electrons from H(2)O, generating a proton gradient subsequently used for ATP formation. This chain is Photosystem II reaction center protein T, found in Nephroselmis olivacea (Green alga).